Consider the following 183-residue polypeptide: Ribosome-recycling factor (183 aa).

This sequence belongs to the RRF family.

Its subcellular location is the cytoplasm. Its function is as follows. Responsible for the release of ribosomes from messenger RNA at the termination of protein biosynthesis. May increase the efficiency of translation by recycling ribosomes from one round of translation to another. The chain is Ribosome-recycling factor from Afipia carboxidovorans (strain ATCC 49405 / DSM 1227 / KCTC 32145 / OM5) (Oligotropha carboxidovorans).